Consider the following 532-residue polypeptide: Type 2 DNA topoisomerase 6 subunit B (532 aa).

ATP contacts are provided by residues Asn-41, Asp-75, 96–97 (SK), 105–112 (GMYGLGVK), and Lys-427.

Belongs to the TOP6B family. Homodimer. Heterotetramer of two Top6A and two Top6B chains.

It carries out the reaction ATP-dependent breakage, passage and rejoining of double-stranded DNA.. Relaxes both positive and negative superturns and exhibits a strong decatenase activity. The polypeptide is Type 2 DNA topoisomerase 6 subunit B (Sulfurisphaera tokodaii (strain DSM 16993 / JCM 10545 / NBRC 100140 / 7) (Sulfolobus tokodaii)).